Consider the following 630-residue polypeptide: 1-deoxy-D-xylulose-5-phosphate synthase (630 aa).

Residues His-72 and Gly-113–Ser-115 contribute to the thiamine diphosphate site. Residue Asp-144 coordinates Mg(2+). Thiamine diphosphate is bound by residues Gly-145 to Ala-146, Asn-173, Tyr-284, and Glu-367. Mg(2+) is bound at residue Asn-173.

This sequence belongs to the transketolase family. DXPS subfamily. As to quaternary structure, homodimer. It depends on Mg(2+) as a cofactor. Thiamine diphosphate is required as a cofactor.

It carries out the reaction D-glyceraldehyde 3-phosphate + pyruvate + H(+) = 1-deoxy-D-xylulose 5-phosphate + CO2. It participates in metabolic intermediate biosynthesis; 1-deoxy-D-xylulose 5-phosphate biosynthesis; 1-deoxy-D-xylulose 5-phosphate from D-glyceraldehyde 3-phosphate and pyruvate: step 1/1. Its function is as follows. Catalyzes the acyloin condensation reaction between C atoms 2 and 3 of pyruvate and glyceraldehyde 3-phosphate to yield 1-deoxy-D-xylulose-5-phosphate (DXP). This Bacillus cereus (strain AH187) protein is 1-deoxy-D-xylulose-5-phosphate synthase.